Reading from the N-terminus, the 359-residue chain is Probably inactive receptor-like protein kinase At5g41680 (359 aa).

The region spanning 59–357 (AASAEILGKG…KLIQDIPTNF (299 aa)) is the Protein kinase domain. Residues 65 to 73 (LGKGAHVTT) and Lys-87 each bind ATP.

The protein belongs to the protein kinase superfamily. Ser/Thr protein kinase family.

The sequence is that of Probably inactive receptor-like protein kinase At5g41680 from Arabidopsis thaliana (Mouse-ear cress).